Consider the following 157-residue polypeptide: Frd operon probable iron-sulfur subunit A (157 aa).

4Fe-4S ferredoxin-type domains are found at residues 24–55 (KGFS…IHNK), 56–85 (DYYY…VVSR), and 100–133 (FKAE…CIDR). Positions 34, 37, 42, 46, 65, 68, 71, 75, 107, 110, 119, and 123 each coordinate [4Fe-4S] cluster.

In Proteus vulgaris, this protein is Frd operon probable iron-sulfur subunit A.